We begin with the raw amino-acid sequence, 303 residues long: Ribosomal protein uL3 glutamine methyltransferase (303 aa).

It belongs to the protein N5-glutamine methyltransferase family. PrmB subfamily.

It carries out the reaction L-glutaminyl-[ribosomal protein uL3] + S-adenosyl-L-methionine = N(5)-methyl-L-glutaminyl-[ribosomal protein uL3] + S-adenosyl-L-homocysteine + H(+). Methylates large ribosomal subunit protein uL3 on a specific glutamine residue. The sequence is that of Ribosomal protein uL3 glutamine methyltransferase from Neisseria meningitidis serogroup A / serotype 4A (strain DSM 15465 / Z2491).